Here is a 54-residue protein sequence, read N- to C-terminus: Protein YojO (54 aa).

The protein belongs to the YojO family.

The sequence is that of Protein YojO (yojO) from Escherichia coli (strain K12).